We begin with the raw amino-acid sequence, 778 residues long: DNA topoisomerase 1 (778 aa).

The interval 1-141 is disordered; it reads MNSSDEEDIA…ETPEEDQGYK (141 aa). Low complexity predominate over residues 17–26; it reads KSSSITSAST. Composition is skewed to basic and acidic residues over residues 71–83 and 100–121; these read VKTE…EPKS and EKTT…ESKT. Positions 122–131 are enriched in polar residues; the sequence is QSDSQASVKS. 3 interaction with DNA regions span residues 367-368, 430-435, and 522-524; these read KY, RAGGEK, and TAK. One can recognise a Topo IB-type catalytic domain in the interval 374–778; it reads NSSVKGQSDF…IESADENWRF (405 aa). Y736 functions as the O-(3'-phospho-DNA)-tyrosine intermediate in the catalytic mechanism.

This sequence belongs to the type IB topoisomerase family.

The enzyme catalyses ATP-independent breakage of single-stranded DNA, followed by passage and rejoining.. In terms of biological role, releases the supercoiling and torsional tension of DNA introduced during the DNA replication and transcription by transiently cleaving and rejoining one strand of the DNA duplex. Introduces a single-strand break via transesterification at a target site in duplex DNA. The scissile phosphodiester is attacked by the catalytic tyrosine of the enzyme, resulting in the formation of a DNA-(3'-phosphotyrosyl)-enzyme intermediate and the expulsion of a 5'-OH DNA strand. The free DNA strand then rotates around the intact phosphodiester bond on the opposing strand, thus removing DNA supercoils. Finally, in the religation step, the DNA 5'-OH attacks the covalent intermediate to expel the active-site tyrosine and restore the DNA phosphodiester backbone. The sequence is that of DNA topoisomerase 1 (TOP1) from Candida albicans (Yeast).